The sequence spans 604 residues: Kelch-like protein 15 (604 aa).

One can recognise a BTB domain in the interval 31–98 (LDVTLLIEEH…MYYGSLELSM (68 aa)). A BACK domain is found at 133 to 237 (CAEVMRLLED…TPANIFEKVK (105 aa)). 5 Kelch repeats span residues 328-379 (FAFL…VIGK), 381-426 (IYAV…VLNG), 428-473 (LYIT…NKSK), 489-542 (KLYV…VLDK), and 544-592 (IMVL…SLHF).

It is found in the nucleus. It participates in protein modification; protein ubiquitination. Its function is as follows. Substrate-specific adapter for an E3 ubiquitin-protein ligase complex. The polypeptide is Kelch-like protein 15 (klhl15) (Danio rerio (Zebrafish)).